Consider the following 250-residue polypeptide: Phosphoribosylaminoimidazole-succinocarboxamide synthase (250 aa).

This sequence belongs to the SAICAR synthetase family.

It carries out the reaction 5-amino-1-(5-phospho-D-ribosyl)imidazole-4-carboxylate + L-aspartate + ATP = (2S)-2-[5-amino-1-(5-phospho-beta-D-ribosyl)imidazole-4-carboxamido]succinate + ADP + phosphate + 2 H(+). The protein operates within purine metabolism; IMP biosynthesis via de novo pathway; 5-amino-1-(5-phospho-D-ribosyl)imidazole-4-carboxamide from 5-amino-1-(5-phospho-D-ribosyl)imidazole-4-carboxylate: step 1/2. The chain is Phosphoribosylaminoimidazole-succinocarboxamide synthase from Synechococcus sp. (strain WH7803).